A 105-amino-acid polypeptide reads, in one-letter code: T cell receptor alpha variable 40 (105 aa).

The first 19 residues, 1–19 (MNSSLDFLILILMFGGTSS), serve as a signal peptide directing secretion. One can recognise an Ig-like domain in the interval 20 to 105 (NSVKQTGQIT…DSAVYYCLLG (86 aa)). N-linked (GlcNAc...) asparagine glycosylation occurs at asparagine 39. Residues cysteine 40 and cysteine 102 are joined by a disulfide bond.

In terms of assembly, alpha-beta TR is a heterodimer composed of an alpha and beta chain; disulfide-linked. The alpha-beta TR is associated with the transmembrane signaling CD3 coreceptor proteins to form the TR-CD3 (TcR or TCR). The assembly of alpha-beta TR heterodimers with CD3 occurs in the endoplasmic reticulum where a single alpha-beta TR heterodimer associates with one CD3D-CD3E heterodimer, one CD3G-CD3E heterodimer and one CD247 homodimer forming a stable octameric structure. CD3D-CD3E and CD3G-CD3E heterodimers preferentially associate with TR alpha and TR beta chains, respectively. The association of the CD247 homodimer is the last step of TcR assembly in the endoplasmic reticulum and is required for transport to the cell surface.

The protein resides in the cell membrane. V region of the variable domain of T cell receptor (TR) alpha chain that participates in the antigen recognition. Alpha-beta T cell receptors are antigen specific receptors which are essential to the immune response and are present on the cell surface of T lymphocytes. Recognize peptide-major histocompatibility (MH) (pMH) complexes that are displayed by antigen presenting cells (APC), a prerequisite for efficient T cell adaptive immunity against pathogens. Binding of alpha-beta TR to pMH complex initiates TR-CD3 clustering on the cell surface and intracellular activation of LCK that phosphorylates the ITAM motifs of CD3G, CD3D, CD3E and CD247 enabling the recruitment of ZAP70. In turn ZAP70 phosphorylates LAT, which recruits numerous signaling molecules to form the LAT signalosome. The LAT signalosome propagates signal branching to three major signaling pathways, the calcium, the mitogen-activated protein kinase (MAPK) kinase and the nuclear factor NF-kappa-B (NF-kB) pathways, leading to the mobilization of transcription factors that are critical for gene expression and essential for T cell growth and differentiation. The T cell repertoire is generated in the thymus, by V-(D)-J rearrangement. This repertoire is then shaped by intrathymic selection events to generate a peripheral T cell pool of self-MH restricted, non-autoaggressive T cells. Post-thymic interaction of alpha-beta TR with the pMH complexes shapes TR structural and functional avidity. The polypeptide is T cell receptor alpha variable 40 (Homo sapiens (Human)).